The primary structure comprises 382 residues: Opsin Rh3 (382 aa).

The Extracellular portion of the chain corresponds to 1 to 56 (MEYHNVSSVLGNVSSVLRPDARLSAESRLLGWNVPPDELRHIPEHWLIYPEPPESM). The N-linked (GlcNAc...) asparagine glycan is linked to Asn-12. A helical membrane pass occupies residues 57–81 (NYLLGTLYIFFTVISMIGNGLVMWV). Over 82 to 93 (FSAAKSLRTPSN) the chain is Cytoplasmic. Residues 94-118 (ILVINLAFCDFMMMIKTPIFIYNSF) traverse the membrane as a helical segment. The Extracellular portion of the chain corresponds to 119-132 (HQGYALGHLGCQIF). A disulfide bond links Cys-129 and Cys-206. A helical membrane pass occupies residues 133 to 152 (GVIGSYTGIAAGATNAFIAY). Topologically, residues 153–170 (DRYNVITRPMEGKMTHGK) are cytoplasmic. A helical membrane pass occupies residues 171 to 195 (AIAMIIFIYLYATPWVVACYTESWG). At 196-219 (RFVPEGYLTSCTFDYLTDNFDTRL) the chain is on the extracellular side. The chain crosses the membrane as a helical span at residues 220–247 (FVACIFFFSFVCPTTMITYYYSQIVGHV). Over 248–283 (FSHEKALRDQAKKMNVDSLRSNVDKSKEAAEIRIAK) the chain is Cytoplasmic. Residues 284–307 (AAITICFLFFASWTPYGVMSLIGA) traverse the membrane as a helical segment. The Extracellular portion of the chain corresponds to 308–315 (FGDKTLLT). The helical transmembrane segment at 316–340 (PGATMIPACTCKMVACIDPFVYAIS) threads the bilayer. An N6-(retinylidene)lysine modification is found at Lys-327. Residues 341–382 (HPRYRMELQKRCPWLAISEKAPESAAAISTSTTQEQQQTTAA) lie on the Cytoplasmic side of the membrane.

This sequence belongs to the G-protein coupled receptor 1 family. Opsin subfamily. Phosphorylated on some or all of the serine and threonine residues present in the C-terminal region.

The protein resides in the membrane. Functionally, visual pigments are the light-absorbing molecules that mediate vision. They consist of an apoprotein, opsin, covalently linked to cis-retinal. The sequence is that of Opsin Rh3 (Rh3) from Drosophila pseudoobscura pseudoobscura (Fruit fly).